The primary structure comprises 185 residues: Threonylcarbamoyl-AMP synthase (185 aa).

In terms of domain architecture, YrdC-like spans 4-185 (SFRVQQAARE…LATGEVVRPG (182 aa)).

The protein belongs to the SUA5 family. TsaC subfamily.

Its subcellular location is the cytoplasm. It catalyses the reaction L-threonine + hydrogencarbonate + ATP = L-threonylcarbamoyladenylate + diphosphate + H2O. In terms of biological role, required for the formation of a threonylcarbamoyl group on adenosine at position 37 (t(6)A37) in tRNAs that read codons beginning with adenine. Catalyzes the conversion of L-threonine, HCO(3)(-)/CO(2) and ATP to give threonylcarbamoyl-AMP (TC-AMP) as the acyladenylate intermediate, with the release of diphosphate. In Pseudomonas putida (strain ATCC 700007 / DSM 6899 / JCM 31910 / BCRC 17059 / LMG 24140 / F1), this protein is Threonylcarbamoyl-AMP synthase.